Reading from the N-terminus, the 141-residue chain is Alpha-lactalbumin (141 aa).

Positions 1-19 (MMPLVPLLLVSIVFPGIQA) are cleaved as a signal peptide. Residues 20 to 141 (TQLTRCELTE…ENLEQWVCKK (122 aa)) form the C-type lysozyme domain. 4 cysteine pairs are disulfide-bonded: Cys25-Cys139, Cys47-Cys130, Cys80-Cys96, and Cys92-Cys110. Asn64 carries N-linked (GlcNAc...) asparagine glycosylation. Ca(2+) is bound by residues Asp101, Asp106, and Asp107.

Belongs to the glycosyl hydrolase 22 family. In terms of assembly, lactose synthase (LS) is a heterodimer of a catalytic component, beta1,4-galactosyltransferase (beta4Gal-T1) and a regulatory component, alpha-lactalbumin (LA). As to expression, mammary gland specific. Secreted in milk.

It is found in the secreted. In terms of biological role, regulatory subunit of lactose synthase, changes the substrate specificity of galactosyltransferase in the mammary gland making glucose a good acceptor substrate for this enzyme. This enables LS to synthesize lactose, the major carbohydrate component of milk. In other tissues, galactosyltransferase transfers galactose onto the N-acetylglucosamine of the oligosaccharide chains in glycoproteins. The protein is Alpha-lactalbumin (LALBA) of Oryctolagus cuniculus (Rabbit).